The chain runs to 940 residues: Inter-alpha-trypsin inhibitor heavy chain H5 (940 aa).

Residues 1 to 16 (MLPLLGLCFALPLCAG) form the signal peptide. Residues 35–161 (IPRQVRLLQR…KAAFLLSYEE (127 aa)) enclose the VIT domain. N-linked (GlcNAc...) asparagine glycosylation is found at Asn97 and Asn127. Positions 207–227 (NSRQRGSGRGPDDSGPPPSTV) are disordered. 6 N-linked (GlcNAc...) asparagine glycosylation sites follow: Asn231, Asn421, Asn508, Asn694, Asn778, and Asn795. A VWFA domain is found at 295–478 (NVVFVLDSSA…AQLIGFYDEI (184 aa)).

The protein belongs to the ITIH family.

The protein resides in the secreted. In terms of biological role, may act as a tumor suppressor. The protein is Inter-alpha-trypsin inhibitor heavy chain H5 (ITIH5) of Bos taurus (Bovine).